The primary structure comprises 438 residues: UDP-N-acetylmuramoylalanine--D-glutamate ligase (438 aa).

Residue 115 to 121 (GSNGKST) participates in ATP binding.

It belongs to the MurCDEF family.

The protein resides in the cytoplasm. The enzyme catalyses UDP-N-acetyl-alpha-D-muramoyl-L-alanine + D-glutamate + ATP = UDP-N-acetyl-alpha-D-muramoyl-L-alanyl-D-glutamate + ADP + phosphate + H(+). The protein operates within cell wall biogenesis; peptidoglycan biosynthesis. Cell wall formation. Catalyzes the addition of glutamate to the nucleotide precursor UDP-N-acetylmuramoyl-L-alanine (UMA). In Vibrio atlanticus (strain LGP32) (Vibrio splendidus (strain Mel32)), this protein is UDP-N-acetylmuramoylalanine--D-glutamate ligase.